The following is a 92-amino-acid chain: Signal recognition particle 19 kDa protein (92 aa).

Belongs to the SRP19 family. Part of the signal recognition particle protein translocation system, which is composed of SRP and FtsY. Archaeal SRP consists of a 7S RNA molecule of 300 nucleotides and two protein subunits: SRP54 and SRP19.

It localises to the cytoplasm. Functionally, involved in targeting and insertion of nascent membrane proteins into the cytoplasmic membrane. Binds directly to 7S RNA and mediates binding of the 54 kDa subunit of the SRP. The protein is Signal recognition particle 19 kDa protein of Haloferax volcanii (strain ATCC 29605 / DSM 3757 / JCM 8879 / NBRC 14742 / NCIMB 2012 / VKM B-1768 / DS2) (Halobacterium volcanii).